The chain runs to 205 residues: Ribosomal RNA small subunit methyltransferase G (205 aa).

S-adenosyl-L-methionine is bound by residues G70, L75, 121-122 (IE), and R136.

This sequence belongs to the methyltransferase superfamily. RNA methyltransferase RsmG family.

The protein resides in the cytoplasm. The enzyme catalyses guanosine(527) in 16S rRNA + S-adenosyl-L-methionine = N(7)-methylguanosine(527) in 16S rRNA + S-adenosyl-L-homocysteine. Its function is as follows. Specifically methylates the N7 position of guanine in position 527 of 16S rRNA. The protein is Ribosomal RNA small subunit methyltransferase G of Methylococcus capsulatus (strain ATCC 33009 / NCIMB 11132 / Bath).